We begin with the raw amino-acid sequence, 248 residues long: Small ribosomal subunit protein uS3 (248 aa).

Residues 38–106 (VREYLVKTLD…QVALNILEVK (69 aa)) enclose the KH type-2 domain. Residues 213–230 (ESEINAPAERRGRGDRNG) show a composition bias toward basic and acidic residues. The interval 213–248 (ESEINAPAERRGRGDRNGRPRRGGQRRQRSEQKQEG) is disordered.

This sequence belongs to the universal ribosomal protein uS3 family. As to quaternary structure, part of the 30S ribosomal subunit. Forms a tight complex with proteins S10 and S14.

Functionally, binds the lower part of the 30S subunit head. Binds mRNA in the 70S ribosome, positioning it for translation. The protein is Small ribosomal subunit protein uS3 of Corynebacterium diphtheriae (strain ATCC 700971 / NCTC 13129 / Biotype gravis).